The sequence spans 193 residues: Copper-binding lipoprotein NosL (193 aa).

A signal peptide spans 1 to 19; that stretch reads MRTRLRFVLVAAALALLSA. The N-palmitoyl cysteine moiety is linked to residue C20. A lipid anchor (S-diacylglycerol cysteine) is attached at C20.

It belongs to the NosL family. Monomer. Apo-NosL can form homodimers.

The protein resides in the cell membrane. In terms of biological role, may act as a metallochaperone involved in nitrous oxide reductase assembly. Specifically binds Cu(+). The chain is Copper-binding lipoprotein NosL from Achromobacter cycloclastes.